Here is a 199-residue protein sequence, read N- to C-terminus: DnaJ homolog subfamily C member 5B (199 aa).

Residues Ser14 and Ser16 each carry the phosphoserine modification. One can recognise a J domain in the interval 19-84; it reads ALYEILGLHK…SKRNIYDKYG (66 aa).

Interacts with the chaperone complex consisting of HSC70 and SGTA. Palmitoylated.

The protein resides in the membrane. In Bos taurus (Bovine), this protein is DnaJ homolog subfamily C member 5B (DNAJC5B).